The following is a 678-amino-acid chain: Ribosome biogenesis protein BOP1 homolog (678 aa).

Residues 1-10 are compositionally biased toward basic and acidic residues; sequence MGHSDGDHGS. The disordered stretch occupies residues 1 to 73; sequence MGHSDGDHGS…VAPRNTIGDV (73 aa). Acidic residues predominate over residues 24-63; sequence WSDDDDEGSLSFEDSGEGSDAESDEPDAPAVEESDSSEDE. WD repeat units lie at residues 343-384, 386-424, 463-505, 508-548, 549-588, 592-631, and 647-678; these read GHNG…KVWN, GGVV…EDAQ, IHHK…SHHP, KLPG…KKLE, SGVR…RPYK, NHSK…DLNQ, and SDGR…LYCD.

It belongs to the WD repeat BOP1/ERB1 family.

Its subcellular location is the nucleus. The protein resides in the nucleolus. It is found in the nucleoplasm. Its function is as follows. Required for maturation of ribosomal RNAs and formation of the large ribosomal subunit. The sequence is that of Ribosome biogenesis protein BOP1 homolog from Oryza sativa subsp. japonica (Rice).